Here is a 441-residue protein sequence, read N- to C-terminus: Homogentisate 1,2-dioxygenase (441 aa).

His287 acts as the Proton acceptor in catalysis. Fe cation contacts are provided by His330 and Glu336. Homogentisate contacts are provided by Tyr345 and His366. Residue His366 participates in Fe cation binding.

Belongs to the homogentisate dioxygenase family. As to quaternary structure, hexamer; dimer of trimers. The cofactor is Fe cation.

The enzyme catalyses homogentisate + O2 = 4-maleylacetoacetate + H(+). It participates in amino-acid degradation; L-phenylalanine degradation; acetoacetate and fumarate from L-phenylalanine: step 4/6. Functionally, involved in the catabolism of homogentisate (2,5-dihydroxyphenylacetate or 2,5-OH-PhAc), a central intermediate in the degradation of phenylalanine and tyrosine. Catalyzes the oxidative ring cleavage of the aromatic ring of homogentisate to yield maleylacetoacetate. The sequence is that of Homogentisate 1,2-dioxygenase from Xanthomonas oryzae pv. oryzae (strain MAFF 311018).